A 372-amino-acid polypeptide reads, in one-letter code: Alanine racemase (372 aa).

The active-site Proton acceptor; specific for D-alanine is Lys-48. Lys-48 is subject to N6-(pyridoxal phosphate)lysine. Substrate is bound at residue Arg-143. Tyr-268 serves as the catalytic Proton acceptor; specific for L-alanine. Met-316 provides a ligand contact to substrate.

This sequence belongs to the alanine racemase family. Pyridoxal 5'-phosphate is required as a cofactor.

The enzyme catalyses L-alanine = D-alanine. It participates in amino-acid biosynthesis; D-alanine biosynthesis; D-alanine from L-alanine: step 1/1. In terms of biological role, catalyzes the interconversion of L-alanine and D-alanine. May also act on other amino acids. The chain is Alanine racemase (alr) from Vibrio vulnificus (strain YJ016).